The primary structure comprises 418 residues: Somatostatin receptor type 3 (418 aa).

Residues Met-1–Ala-21 are disordered. Over Met-1–Ser-43 the chain is Extracellular. Residues Ser-7–Ser-20 show a composition bias toward polar residues. Asn-17 and Asn-30 each carry an N-linked (GlcNAc...) asparagine glycan. The helical transmembrane segment at Gly-44 to Val-69 threads the bilayer. The Cytoplasmic portion of the chain corresponds to Leu-70 to Thr-79. Residues Asn-80–Ala-101 traverse the membrane as a helical segment. The Extracellular portion of the chain corresponds to Ala-102–Cys-116. Cys-116 and Cys-191 form a disulfide bridge. The chain crosses the membrane as a helical span at residues Arg-117–Ser-138. Residues Val-139–Arg-161 are Cytoplasmic-facing. Residues Thr-162 to Phe-181 form a helical membrane-spanning segment. Residues Ser-182–Gly-205 lie on the Extracellular side of the membrane. The helical transmembrane segment at Phe-206–Val-231 threads the bilayer. The Cytoplasmic segment spans residues Lys-232–Arg-257. A helical transmembrane segment spans residues Met-258–Val-279. Residues Asn-280 to Gly-293 lie on the Extracellular side of the membrane. Residues Leu-294 to Leu-316 form a helical membrane-spanning segment. Residues Ser-317–Leu-418 are Cytoplasmic-facing. Phosphoserine is present on residues Ser-332 and Ser-337. Residues Val-335 to Leu-418 form a disordered region. Thr-348 carries the phosphothreonine modification. A compositionally biased stretch (acidic residues) spans Thr-348–Glu-360. Basic and acidic residues predominate over residues Ser-361–Asn-371. Polar residues-rich tracts occupy residues Arg-373 to Gln-385 and Lys-395 to Leu-418.

The protein belongs to the G-protein coupled receptor 1 family. In terms of assembly, homodimer and heterodimer with SSTR2. Heterodimerization with SSTR2 inactivates SSTR3 receptor function. In terms of processing, phosphorylated. Phosphorylation increases upon somatostatin binding. As to expression, brain, pituitary and pancreas.

It localises to the cell membrane. In terms of biological role, receptor for somatostatin-14 and -28. This receptor is coupled via pertussis toxin sensitive G proteins to inhibition of adenylyl cyclase. This Homo sapiens (Human) protein is Somatostatin receptor type 3 (SSTR3).